Consider the following 328-residue polypeptide: Malate dehydrogenase (328 aa).

11–17 (GAAGQIG) provides a ligand contact to NAD(+). 2 residues coordinate substrate: Arg-94 and Arg-100. NAD(+) contacts are provided by residues Asn-107, Gln-114, and 131–133 (VGN). Positions 133 and 164 each coordinate substrate. The Proton acceptor role is filled by His-189.

It belongs to the LDH/MDH superfamily. MDH type 2 family.

It catalyses the reaction (S)-malate + NAD(+) = oxaloacetate + NADH + H(+). Catalyzes the reversible oxidation of malate to oxaloacetate. The chain is Malate dehydrogenase from Acinetobacter baumannii (strain AB0057).